We begin with the raw amino-acid sequence, 734 residues long: Tripartite terminase subunit 3 (734 aa).

The Nuclear localization signal motif lies at A184–V190. The Walker A motif motif lies at V259–T266. The Walker B motif motif lies at L353–E358. E358 functions as the For ATPase activity in the catalytic mechanism. Active-site for nuclease activity residues include D511, E583, and D707.

The protein belongs to the herpesviridae TRM3 protein family. As to quaternary structure, interacts with the terminase subunits TRM1 and TRM2. Interacts with portal protein.

It is found in the host nucleus. In terms of biological role, component of the molecular motor that translocates viral genomic DNA in empty capsid during DNA packaging. Forms a tripartite terminase complex together with TRM1 and TRM2 in the host cytoplasm. Once the complex reaches the host nucleus, it interacts with the capsid portal vertex. This portal forms a ring in which genomic DNA is translocated into the capsid. TRM3 carries an RNase H-like nuclease activity that plays an important role for the cleavage of concatemeric viral DNA into unit length genomes. The chain is Tripartite terminase subunit 3 from Equus caballus (Horse).